The sequence spans 166 residues: Cilia- and flagella-associated protein 68 (166 aa).

Mn stretches follow at residues 98–109 (TTYDANYSRKKP) and 139–149 (KSTYMTNYSEP).

The protein belongs to the CFAP68 family. As to quaternary structure, microtubule inner protein component of sperm flagellar doublet microtubules.

The protein localises to the cytoplasm. The protein resides in the cytoskeleton. Its subcellular location is the cilium axoneme. It localises to the flagellum axoneme. It is found in the nucleus. The protein localises to the cell projection. The protein resides in the cilium. Microtubule inner protein (MIP) part of the dynein-decorated doublet microtubules (DMTs) in cilia axoneme, which is required for motile cilia beating. The chain is Cilia- and flagella-associated protein 68 (Cfap68) from Mus musculus (Mouse).